A 601-amino-acid chain; its full sequence is MAEPSGAETRPPIRVTVKTPKDKEEIVICDRASVKEFKEEISRRFKAQQDQLVLIFAGKILKDGDTLNQHGIKDGLTVHLVIKTPQKAQDPAAATASSPSTPDPASAPSTTPASPATPAQPSTSGSASSDAGSGSRRSSGGGPSPGAGEGSPSATASILSGFGGILGLGSLGLGSANFMELQQQMQRQLMSNPEMLSQIMENPLVQDMMSNPDLMRHMIMANPQMQQLMERNPEISHMLNNPELMRQTMELARNPAMMQEMMRNQDRALSNLESIPGGYNALRRMYTDIQEPMFSAAREQFGNNPFSSLAGNSDSSSSQPLRTENREPLPNPWSPSPPTSQAPGSGGEGTGGSGTSQVHPTVSNPFGINAASLGSGMFNSPEMQALLQQISENPQLMQNVISAPYMRSMMQTLAQNPDFAAQMMVNVPLFAGNPQLQEQLRLQLPVFLQQMQNPESLSILTNPRAMQALLQIQQGLQTLQTEAPGLVPSLGSFGISRTPAPSAGSNAGSTPEAPTSSPATPATSSPTGASSAQQQLMQQMIQLLAGSGNSQVQTPEVRFQQQLEQLNSMGFINREANLQALIATGGDINAAIERLLGSQLS.

The region spanning 13–87 (IRVTVKTPKD…VHLVIKTPQK (75 aa)) is the Ubiquitin-like domain. Residues Lys23 and Lys62 each participate in a glycyl lysine isopeptide (Lys-Gly) (interchain with G-Cter in SUMO2) cross-link. The tract at residues 87–155 (KAQDPAAATA…GAGEGSPSAT (69 aa)) is disordered. Over residues 88 to 138 (AQDPAAATASSPSTPDPASAPSTTPASPATPAQPSTSGSASSDAGSGSRRS) the composition is skewed to low complexity. Phosphoserine occurs at positions 98 and 144. Residues 139 to 149 (SGGGPSPGAGE) are compositionally biased toward gly residues. 2 consecutive STI1 domains span residues 192 to 229 (NPEMLSQIMENPLVQDMMSNPDLMRHMIMANPQMQQLM) and 230 to 261 (ERNPEISHMLNNPELMRQTMELARNPAMMQEM). Thr287 is modified (phosphothreonine). The disordered stretch occupies residues 301 to 366 (FGNNPFSSLA…QVHPTVSNPF (66 aa)). Over residues 307–318 (SSLAGNSDSSSS) the composition is skewed to low complexity. A Phosphoserine; by ATM modification is found at Ser318. Pro residues predominate over residues 329-340 (LPNPWSPSPPTS). A compositionally biased stretch (gly residues) spans 344–354 (GSGGEGTGGSG). The span at 357–366 (QVHPTVSNPF) shows a compositional bias: polar residues. STI1 domains lie at 393 to 440 (NPQL…QEQL) and 444 to 476 (LPVFLQQMQNPESLSILTNPRAMQALLQIQQGL). The segment at 490 to 533 (LGSFGISRTPAPSAGSNAGSTPEAPTSSPATPATSSPTGASSAQ) is disordered. The segment covering 507–533 (AGSTPEAPTSSPATPATSSPTGASSAQ) has biased composition (low complexity). In terms of domain architecture, UBA spans 553–598 (QTPEVRFQQQLEQLNSMGFINREANLQALIATGGDINAAIERLLGS).

In terms of assembly, homooligomer. Binds signal sequences of proteins that are targeted to the endoplasmic reticulum. Interacts (via UBA domain) with GJA1 (not ubiquitinated) and with ubiquitin; both compete for the same binding site. Interacts (via UBA domain) with ubiquitin and with polyubiquitin chains. Interacts (via ubiquitin-like domain) with PSMD2 and PSMD4, regulatory subunits of the 26S proteasome. Interacts with ATXN1/SCA1; interaction with ATXN1 inhibits polyubiquitination of UBQLN4 and interferes with PSMD4 binding. Interacts with HERPUD1. Interacts (via ubiquitin-like domain) with UBQLN1 (via UBA domain). Interacts with UBQLN2. Interacts (via STI1 1 and 2 domains) with MAP1LC3A/B/C. Interacts with BAG6. Interacts with MRE11 (when ubiquitinated); interaction with ubiquitinated MRE11 leads to MRE11 removal from chromatin. Interacts with DESI1/POST; leading to nuclear export. Interacts with BCL2A1 and BCL2L10. As to quaternary structure, (Microbial infection) Interacts with Mumps virus protein SH. In terms of processing, phosphorylated by ATM at Ser-318 in response to DNA damage, leading to localization in the nucleus and recruitment to sites of DNA damage. Post-translationally, ubiquitinated; this does not lead to proteasomal degradation. May undergo both 'Lys-48'- and 'Lys-63'-linked polyubiquitination. Highly expressed in pancreas, kidney, skeletal muscle, heart and throughout the brain, and at lower levels in placenta, lung and liver.

Its subcellular location is the nucleus. It localises to the cytoplasm. The protein localises to the chromosome. It is found in the endoplasmic reticulum. The protein resides in the perinuclear region. Its subcellular location is the cytoplasmic vesicle. It localises to the autophagosome. In terms of biological role, regulator of protein degradation that mediates the proteasomal targeting of misfolded, mislocalized or accumulated proteins. Acts by binding polyubiquitin chains of target proteins via its UBA domain and by interacting with subunits of the proteasome via its ubiquitin-like domain. Key regulator of DNA repair that represses homologous recombination repair: in response to DNA damage, recruited to sites of DNA damage following phosphorylation by ATM and acts by binding and removing ubiquitinated MRE11 from damaged chromatin, leading to MRE11 degradation by the proteasome. MRE11 degradation prevents homologous recombination repair, redirecting double-strand break repair toward non-homologous end joining (NHEJ). Specifically recognizes and binds mislocalized transmembrane-containing proteins and targets them to proteasomal degradation. Collaborates with DESI1/POST in the export of ubiquitinated proteins from the nucleus to the cytoplasm. Also plays a role in the regulation of the proteasomal degradation of non-ubiquitinated GJA1. Acts as an adapter protein that recruits UBQLN1 to the autophagy machinery. Mediates the association of UBQLN1 with autophagosomes and the autophagy-related protein LC3 (MAP1LC3A/B/C) and may assist in the maturation of autophagosomes to autolysosomes by mediating autophagosome-lysosome fusion. The chain is Ubiquilin-4 from Homo sapiens (Human).